The following is a 514-amino-acid chain: Putative ankyrin repeat protein R863 (514 aa).

15 ANK repeats span residues A45–P74, K84–S114, K115–A144, K146–V174, D176–A204, D205–A234, N236–S264, N266–S294, E295–A324, D325–S354, N356–S384, D385–V414, N415–A444, N446–A474, and N476–S504.

The polypeptide is Putative ankyrin repeat protein R863 (Acanthamoeba polyphaga mimivirus (APMV)).